The primary structure comprises 400 residues: Capsid protein (400 aa).

Residues 1 to 10 (MDPNLDQDTL) show a composition bias toward polar residues. The disordered stretch occupies residues 1–54 (MDPNLDQDTLPTHEEIDNDVDSAEEEPPEPPLLPDDIDDDDSHGSRTRRQVKPP). Residues 16–28 (IDNDVDSAEEEPP) show a composition bias toward acidic residues.

It belongs to the potexvirus capsid protein family.

It is found in the virion. Required for genome encapsidation. The protein is Capsid protein (ORF3) of Botryotinia fuckeliana (Noble rot fungus).